A 1072-amino-acid polypeptide reads, in one-letter code: DNA-directed RNA polymerase subunit beta (1072 aa).

This sequence belongs to the RNA polymerase beta chain family. In plastids the minimal PEP RNA polymerase catalytic core is composed of four subunits: alpha, beta, beta', and beta''. When a (nuclear-encoded) sigma factor is associated with the core the holoenzyme is formed, which can initiate transcription.

The protein resides in the plastid. It localises to the chloroplast. The catalysed reaction is RNA(n) + a ribonucleoside 5'-triphosphate = RNA(n+1) + diphosphate. In terms of biological role, DNA-dependent RNA polymerase catalyzes the transcription of DNA into RNA using the four ribonucleoside triphosphates as substrates. The sequence is that of DNA-directed RNA polymerase subunit beta from Olimarabidopsis pumila (Dwarf rocket).